Reading from the N-terminus, the 620-residue chain is Probable potassium transport system protein Kup (620 aa).

A run of 12 helical transmembrane segments spans residues 7–27, 44–64, 98–118, 135–155, 166–186, 201–221, 245–265, 278–298, 335–355, 361–381, 394–414, and 417–437; these read LALAALGVVFGDIGTSPLYAI, VFGVLSLLVWSLLLIVSLKYL, FFLIAIGLFGAALLYGDGMIT, PAFHDLIIPATVTVLVILFLF, LFGPVILLWFVVLGVLGLVEI, GIMFLLNNQLHGFMVLGAVFL, WAFLVLPALLLNYFGQGALLL, LVPSWGLIPMVILSTSATIIA, IYVPAANWSLMVATISLVIGF, LAAAYGVAVTATMLISTILFY, VLNVMIVVFLLVDLAFFGASA, and LFHGAWFPLVIAAVMFTVMMT.

It belongs to the HAK/KUP transporter (TC 2.A.72) family.

It localises to the cell inner membrane. It catalyses the reaction K(+)(in) + H(+)(in) = K(+)(out) + H(+)(out). Its function is as follows. Transport of potassium into the cell. Likely operates as a K(+):H(+) symporter. In Chlorobium chlorochromatii (strain CaD3), this protein is Probable potassium transport system protein Kup.